The chain runs to 209 residues: Uracil phosphoribosyltransferase (209 aa).

Residues arginine 79, arginine 104, and 131–139 contribute to the 5-phospho-alpha-D-ribose 1-diphosphate site; that span reads DPMLATGGS. Uracil is bound by residues isoleucine 194 and 199–201; that span reads GDA. Residue aspartate 200 participates in 5-phospho-alpha-D-ribose 1-diphosphate binding.

The protein belongs to the UPRTase family. Requires Mg(2+) as cofactor.

The enzyme catalyses UMP + diphosphate = 5-phospho-alpha-D-ribose 1-diphosphate + uracil. It functions in the pathway pyrimidine metabolism; UMP biosynthesis via salvage pathway; UMP from uracil: step 1/1. Allosterically activated by GTP. In terms of biological role, catalyzes the conversion of uracil and 5-phospho-alpha-D-ribose 1-diphosphate (PRPP) to UMP and diphosphate. The polypeptide is Uracil phosphoribosyltransferase (Geobacillus kaustophilus (strain HTA426)).